Reading from the N-terminus, the 72-residue chain is UPF0729 protein C18orf32 homolog (72 aa).

A necessary for its localzation to the endoplasmic reticulum and lipid droplets region spans residues 1-33; sequence MVCIPCIVIPVLLWIFKKFLEPYIYPVVSRIWP. Residues 36–72 form a disordered region; that stretch reads AVQQSGDKNMSKVDCKGAGTNGLPTKGPTEVSDKKKD.

The protein belongs to the UPF0729 family. As to quaternary structure, interacts with DERL1 and AMFR. In terms of processing, undergoes ER-associated degradation (ERAD).

The protein resides in the endoplasmic reticulum. It localises to the lipid droplet. May activate the NF-kappa-B signaling pathway. This chain is UPF0729 protein C18orf32 homolog, found in Mus musculus (Mouse).